A 316-amino-acid chain; its full sequence is MYSKILATGSYLPAQIRTNADLEKMVDTSDEWIFTRSGMKERRIAAADETVATMGAQAAKNALEIANIDHNEIDLIVVGTTTNSHAYPSAACQIQGMLDIQDAIAFDVAAACTGFVYALSVADQFIRSGKIKKALVIGSDLNSRALDETDRSTVVLFGDGAGAVILEASEEQGIISTHLHSSSDTEYMLALPAQKRGDEKSGFIQMQGNATFKLAVGQLSSVVEETLEANNLQKSDLDWLVPHQANIRIIAATAKKLEMDMSQVVLTVEKYGNNSAATVPVALDEAVRDGRIQRGQLLLLEAFGGGWTWGSALVRF.

Catalysis depends on residues Cys-112 and His-243. The segment at 244–248 (QANIR) is ACP-binding. Residue Asn-273 is part of the active site.

The protein belongs to the thiolase-like superfamily. FabH family. As to quaternary structure, homodimer.

The protein resides in the cytoplasm. It catalyses the reaction malonyl-[ACP] + acetyl-CoA + H(+) = 3-oxobutanoyl-[ACP] + CO2 + CoA. Its pathway is lipid metabolism; fatty acid biosynthesis. Catalyzes the condensation reaction of fatty acid synthesis by the addition to an acyl acceptor of two carbons from malonyl-ACP. Catalyzes the first condensation reaction which initiates fatty acid synthesis and may therefore play a role in governing the total rate of fatty acid production. Possesses both acetoacetyl-ACP synthase and acetyl transacylase activities. Its substrate specificity determines the biosynthesis of branched-chain and/or straight-chain of fatty acids. The protein is Beta-ketoacyl-[acyl-carrier-protein] synthase III of Actinobacillus pleuropneumoniae serotype 5b (strain L20).